The chain runs to 293 residues: tRNA pseudouridine synthase B (293 aa).

The Nucleophile role is filled by D39.

It belongs to the pseudouridine synthase TruB family. Type 1 subfamily.

It catalyses the reaction uridine(55) in tRNA = pseudouridine(55) in tRNA. In terms of biological role, responsible for synthesis of pseudouridine from uracil-55 in the psi GC loop of transfer RNAs. The polypeptide is tRNA pseudouridine synthase B (Streptococcus thermophilus (strain CNRZ 1066)).